The chain runs to 331 residues: Tetraacyldisaccharide 4'-kinase (331 aa).

55–62 (SVGGNGKT) is a binding site for ATP.

The protein belongs to the LpxK family.

It carries out the reaction a lipid A disaccharide + ATP = a lipid IVA + ADP + H(+). It functions in the pathway glycolipid biosynthesis; lipid IV(A) biosynthesis; lipid IV(A) from (3R)-3-hydroxytetradecanoyl-[acyl-carrier-protein] and UDP-N-acetyl-alpha-D-glucosamine: step 6/6. In terms of biological role, transfers the gamma-phosphate of ATP to the 4'-position of a tetraacyldisaccharide 1-phosphate intermediate (termed DS-1-P) to form tetraacyldisaccharide 1,4'-bis-phosphate (lipid IVA). In Aeromonas salmonicida (strain A449), this protein is Tetraacyldisaccharide 4'-kinase.